The primary structure comprises 356 residues: Activating signal cointegrator 1 complex subunit 1 (356 aa).

Residues 1-52 form a required for interaction with ASCC3 region; the sequence is MDVLRPQIVTFDGRNYRKNPIQEKQYQHEEDEDFYPDSMEYSDEPCGAYEVA. The KH domain maps to 57 to 119; sequence GFRATVSAPS…NGVVSARTRI (63 aa).

Identified in the ASCC complex that contains ASCC1, ASCC2 and ASCC3. Interacts directly with ASCC3. The ASCC complex interacts with ALKBH3. Part of the ASC-1 complex, that contains TRIP4, ASCC1, ASCC2 and ASCC3. Interacts with CSRP1. Interacts with ZCCHC4. As to expression, expressed in the spinal cord, brain, paraspinal ganglia, thyroid, and submandibular glands.

It is found in the nucleus. It localises to the nucleus speckle. Plays a role in DNA damage repair as component of the ASCC complex. Part of the ASC-1 complex that enhances NF-kappa-B, SRF and AP1 transactivation. In cells responding to gastrin-activated paracrine signals, it is involved in the induction of SERPINB2 expression by gastrin. May also play a role in the development of neuromuscular junction. The polypeptide is Activating signal cointegrator 1 complex subunit 1 (Ascc1) (Mus musculus (Mouse)).